The chain runs to 274 residues: Formamidopyrimidine-DNA glycosylase (274 aa).

Pro2 serves as the catalytic Schiff-base intermediate with DNA. Glu3 (proton donor) is an active-site residue. Lys59 functions as the Proton donor; for beta-elimination activity in the catalytic mechanism. 3 residues coordinate DNA: His93, Arg112, and Arg155. The segment at 240–274 (QVYGRTGRPCPRCGQPLERVRLGGRSTHFCPRCQV) adopts an FPG-type zinc-finger fold. The active-site Proton donor; for delta-elimination activity is Arg264.

It belongs to the FPG family. As to quaternary structure, monomer. Zn(2+) is required as a cofactor.

The enzyme catalyses Hydrolysis of DNA containing ring-opened 7-methylguanine residues, releasing 2,6-diamino-4-hydroxy-5-(N-methyl)formamidopyrimidine.. It catalyses the reaction 2'-deoxyribonucleotide-(2'-deoxyribose 5'-phosphate)-2'-deoxyribonucleotide-DNA = a 3'-end 2'-deoxyribonucleotide-(2,3-dehydro-2,3-deoxyribose 5'-phosphate)-DNA + a 5'-end 5'-phospho-2'-deoxyribonucleoside-DNA + H(+). Functionally, involved in base excision repair of DNA damaged by oxidation or by mutagenic agents. Acts as a DNA glycosylase that recognizes and removes damaged bases. Has a preference for oxidized purines, such as 7,8-dihydro-8-oxoguanine (8-oxoG). Has AP (apurinic/apyrimidinic) lyase activity and introduces nicks in the DNA strand. Cleaves the DNA backbone by beta-delta elimination to generate a single-strand break at the site of the removed base with both 3'- and 5'-phosphates. This Moorella thermoacetica (strain ATCC 39073 / JCM 9320) protein is Formamidopyrimidine-DNA glycosylase.